We begin with the raw amino-acid sequence, 117 residues long: Fluoride-specific ion channel FluC 2 (117 aa).

Transmembrane regions (helical) follow at residues 1-21 (MISI…RSAI), 33-53 (LPIA…LTIG), 60-80 (WFPA…STLA), and 95-115 (LFLN…YIGY). Positions 71 and 74 each coordinate Na(+).

This sequence belongs to the fluoride channel Fluc/FEX (TC 1.A.43) family.

The protein resides in the cell membrane. The enzyme catalyses fluoride(in) = fluoride(out). With respect to regulation, na(+) is not transported, but it plays an essential structural role and its presence is essential for fluoride channel function. Its function is as follows. Fluoride-specific ion channel. Important for reducing fluoride concentration in the cell, thus reducing its toxicity. This Staphylococcus aureus (strain COL) protein is Fluoride-specific ion channel FluC 2.